The following is a 716-amino-acid chain: Exocyst complex component 8 (716 aa).

Serine 15 carries the post-translational modification Phosphoserine. Residues 110–119 are compositionally biased toward low complexity; it reads STGEDTAGAG. Residues 110-149 form a disordered region; that stretch reads STGEDTAGAGPRERGAAQAGFLPGPAGVPREGPGTGEEGK. In terms of domain architecture, PH spans 173-273; that stretch reads YLVYNGDLVE…WLEVLEETKR (101 aa). Positions 275-284 are enriched in basic and acidic residues; sequence LSDKRRREQE. The interval 275–319 is disordered; the sequence is LSDKRRREQEEAAALRAPPPVTSKGSNPFEDEAEEELATPEAEEE. Residues 303–319 are compositionally biased toward acidic residues; that stretch reads FEDEAEEELATPEAEEE. Threonine 313 carries the post-translational modification Phosphothreonine.

Belongs to the EXO84 family. The exocyst complex is composed of EXOC1, EXOC2, EXOC3, EXOC4, EXOC5, EXOC6, EXOC7 and EXOC8. Interacts (via PH domain) with GTP-bound RALA and RALB. Interacts with SH3BP1; required for the localization of both SH3BP1 and the exocyst to the leading edge of migrating cells.

Its subcellular location is the cytoplasm. The protein resides in the perinuclear region. It localises to the cell projection. The protein localises to the growth cone. Functionally, component of the exocyst complex involved in the docking of exocytic vesicles with fusion sites on the plasma membrane. This chain is Exocyst complex component 8 (Exoc8), found in Rattus norvegicus (Rat).